Here is a 127-residue protein sequence, read N- to C-terminus: Protein ApaG (127 aa).

The ApaG domain maps to 3-127; it reads KTSIPDFQIT…FYLIAPLALH (125 aa).

The protein is Protein ApaG of Bdellovibrio bacteriovorus (strain ATCC 15356 / DSM 50701 / NCIMB 9529 / HD100).